Reading from the N-terminus, the 101-residue chain is Small ribosomal subunit protein uS14 (101 aa).

This sequence belongs to the universal ribosomal protein uS14 family. Part of the 30S ribosomal subunit. Contacts proteins S3 and S10.

In terms of biological role, binds 16S rRNA, required for the assembly of 30S particles and may also be responsible for determining the conformation of the 16S rRNA at the A site. The sequence is that of Small ribosomal subunit protein uS14 from Wigglesworthia glossinidia brevipalpis.